Consider the following 376-residue polypeptide: Putative glutamate--cysteine ligase 2-1 (376 aa).

The protein belongs to the glutamate--cysteine ligase type 2 family. YbdK subfamily.

It carries out the reaction L-cysteine + L-glutamate + ATP = gamma-L-glutamyl-L-cysteine + ADP + phosphate + H(+). Its function is as follows. ATP-dependent carboxylate-amine ligase which exhibits weak glutamate--cysteine ligase activity. This is Putative glutamate--cysteine ligase 2-1 from Mycolicibacterium smegmatis (strain ATCC 700084 / mc(2)155) (Mycobacterium smegmatis).